Here is a 746-residue protein sequence, read N- to C-terminus: Transcription factor pbcR (746 aa).

Residues 1–12 (MYPWSSTGTSPF) show a composition bias toward polar residues. The tract at residues 1–40 (MYPWSSTGTSPFSHPDNEGAESGDMSMGEEQQQPHQRRQK) is disordered. A DNA-binding region (zn(2)-C6 fungal-type) is located at residues 47 to 76 (CQSCRASKVRCDQPNPGMPCLRCQKSGKPC). The segment at 109-131 (ELQDSAGDGETAHSTALRSPSQL) is disordered. Over residues 120-131 (AHSTALRSPSQL) the composition is skewed to polar residues.

It is found in the nucleus. Its function is as follows. Transcription factor; part of the gene cluster that mediates the biosynthesis of the diterpene ent-pimara-8(14),15-diene (PD). Acts as a positive regulator for the cluster gene. Down-regulates the expression of the penicillin gene cluster, two putative polyketide clusters, and one putative nonribosomal peptide cluster. The chain is Transcription factor pbcR from Emericella nidulans (strain FGSC A4 / ATCC 38163 / CBS 112.46 / NRRL 194 / M139) (Aspergillus nidulans).